The chain runs to 267 residues: Orotidine 5'-phosphate decarboxylase (267 aa).

Lysine 93 acts as the Proton donor in catalysis.

This sequence belongs to the OMP decarboxylase family. Type 2 subfamily.

It catalyses the reaction orotidine 5'-phosphate + H(+) = UMP + CO2. It functions in the pathway pyrimidine metabolism; UMP biosynthesis via de novo pathway; UMP from orotate: step 2/2. This Herpetosiphon aurantiacus (strain ATCC 23779 / DSM 785 / 114-95) protein is Orotidine 5'-phosphate decarboxylase.